Consider the following 562-residue polypeptide: Ycf55-like protein (562 aa).

The 119-residue stretch at 7–125 (TIVIVDEDPV…DLVTGLKQVH (119 aa)) folds into the Response regulatory domain.

The protein belongs to the ycf55 family.

This is Ycf55-like protein from Synechocystis sp. (strain ATCC 27184 / PCC 6803 / Kazusa).